We begin with the raw amino-acid sequence, 427 residues long: MSAIVDIIGREILDSRGNPTVECDVLLESGTMGRAAVPSGASTGSREAIELRDGEAGRYGGKGVLKAVEHINTEISEAIMGLDASEQAFLDKTLLELDGTDNKSRLGANAMLAVSMAVAKAAAEEAGLPLYRYFGGSGAMQLPVPMMNIVNGGAHANNSLDIQEFMIVPVSQPTFREALRCGAEVFHALKKILSDRGMSTAVGDEGGFAPNFGSNDECLSTILQAIEKAGYRAGEDVLLALDCAASEFYHDGKYQLAGEGLQLSSTEFTDYLANLADKFPIVSIEDGMHESDWAGWKTLTDKLGKKVQLVGDDLFVTNTRILKEGIEKGIANSILIKINQIGTLTETFAAIEMAKRAGYTAVISHRSGETEDSTIADIAVGLNAGQIKTGSLSRSDRISKYNQLLRIEEDLGDIASYPGKSAFYNLR.

Glutamine 163 contributes to the (2R)-2-phosphoglycerate binding site. Glutamate 205 (proton donor) is an active-site residue. Residues aspartate 242, glutamate 285, and aspartate 312 each contribute to the Mg(2+) site. Residues lysine 337, arginine 366, serine 367, and lysine 388 each coordinate (2R)-2-phosphoglycerate. Residue lysine 337 is the Proton acceptor of the active site.

The protein belongs to the enolase family. Requires Mg(2+) as cofactor.

It localises to the cytoplasm. The protein resides in the secreted. It is found in the cell surface. The catalysed reaction is (2R)-2-phosphoglycerate = phosphoenolpyruvate + H2O. It functions in the pathway carbohydrate degradation; glycolysis; pyruvate from D-glyceraldehyde 3-phosphate: step 4/5. In terms of biological role, catalyzes the reversible conversion of 2-phosphoglycerate (2-PG) into phosphoenolpyruvate (PEP). It is essential for the degradation of carbohydrates via glycolysis. This chain is Enolase, found in Paraburkholderia xenovorans (strain LB400).